Here is a 274-residue protein sequence, read N- to C-terminus: Diaminopimelate epimerase (274 aa).

Substrate-binding residues include Asn-11 and Asn-65. Catalysis depends on Cys-74, which acts as the Proton donor. Substrate contacts are provided by residues 75–76 (GN), Asn-158, Asn-191, and 209–210 (ER). Cys-218 serves as the catalytic Proton acceptor. Residue 219–220 (GT) coordinates substrate.

Belongs to the diaminopimelate epimerase family. In terms of assembly, homodimer.

It localises to the cytoplasm. The catalysed reaction is (2S,6S)-2,6-diaminopimelate = meso-2,6-diaminopimelate. It participates in amino-acid biosynthesis; L-lysine biosynthesis via DAP pathway; DL-2,6-diaminopimelate from LL-2,6-diaminopimelate: step 1/1. In terms of biological role, catalyzes the stereoinversion of LL-2,6-diaminopimelate (L,L-DAP) to meso-diaminopimelate (meso-DAP), a precursor of L-lysine and an essential component of the bacterial peptidoglycan. This chain is Diaminopimelate epimerase, found in Carboxydothermus hydrogenoformans (strain ATCC BAA-161 / DSM 6008 / Z-2901).